A 314-amino-acid polypeptide reads, in one-letter code: NADH-ubiquinone oxidoreductase chain 2 (314 aa).

Transmembrane regions (helical) follow at residues 13-35, 61-80, 85-107, 117-139, 144-166, 189-209, 224-244, 246-266, and 294-314; these read LGVMLIGTILSVSSEELVGVWLG, YFVVQSTGSILMLVGFVSLM, VSGLVMSTAXTVLKSGVFPLHSW, WLASGLMLTWQKVAPLVFLSMIL, LWVVIVSMAGIGAVGGLNQNSVR, VVFVGYFAVYSLSVGLFFYGC, AASGMGLLMLMGMPPFLGFLA, VLVFLMSGSPVIVACIMGSVI, and IWSLVICMNIMGGALILVSFI.

Belongs to the complex I subunit 2 family.

The protein localises to the mitochondrion inner membrane. It catalyses the reaction a ubiquinone + NADH + 5 H(+)(in) = a ubiquinol + NAD(+) + 4 H(+)(out). Functionally, core subunit of the mitochondrial membrane respiratory chain NADH dehydrogenase (Complex I) that is believed to belong to the minimal assembly required for catalysis. Complex I functions in the transfer of electrons from NADH to the respiratory chain. The immediate electron acceptor for the enzyme is believed to be ubiquinone. The chain is NADH-ubiquinone oxidoreductase chain 2 (ND2) from Mytilus edulis (Blue mussel).